A 293-amino-acid chain; its full sequence is 4-diphosphocytidyl-2-C-methyl-D-erythritol kinase (293 aa).

K16 is an active-site residue. 99-109 (PMGAGLGGGSS) lines the ATP pocket. D141 is a catalytic residue.

It belongs to the GHMP kinase family. IspE subfamily.

The enzyme catalyses 4-CDP-2-C-methyl-D-erythritol + ATP = 4-CDP-2-C-methyl-D-erythritol 2-phosphate + ADP + H(+). It functions in the pathway isoprenoid biosynthesis; isopentenyl diphosphate biosynthesis via DXP pathway; isopentenyl diphosphate from 1-deoxy-D-xylulose 5-phosphate: step 3/6. Functionally, catalyzes the phosphorylation of the position 2 hydroxy group of 4-diphosphocytidyl-2C-methyl-D-erythritol. In Burkholderia pseudomallei (strain 668), this protein is 4-diphosphocytidyl-2-C-methyl-D-erythritol kinase.